The primary structure comprises 282 residues: NADPH-dependent 7-cyano-7-deazaguanine reductase (282 aa).

I88–S90 is a binding site for substrate. S90–K91 serves as a coordination point for NADPH. C190 serves as the catalytic Thioimide intermediate. The active-site Proton donor is the D197. Residue H229–E230 coordinates substrate. An NADPH-binding site is contributed by R258 to G259.

It belongs to the GTP cyclohydrolase I family. QueF type 2 subfamily. As to quaternary structure, homodimer.

It is found in the cytoplasm. The enzyme catalyses 7-aminomethyl-7-carbaguanine + 2 NADP(+) = 7-cyano-7-deazaguanine + 2 NADPH + 3 H(+). The protein operates within tRNA modification; tRNA-queuosine biosynthesis. Its function is as follows. Catalyzes the NADPH-dependent reduction of 7-cyano-7-deazaguanine (preQ0) to 7-aminomethyl-7-deazaguanine (preQ1). The chain is NADPH-dependent 7-cyano-7-deazaguanine reductase from Salmonella paratyphi B (strain ATCC BAA-1250 / SPB7).